We begin with the raw amino-acid sequence, 61 residues long: Small ribosomal subunit protein uS14B (61 aa).

Residues C24, C27, C40, and C43 each coordinate Zn(2+).

The protein belongs to the universal ribosomal protein uS14 family. Zinc-binding uS14 subfamily. As to quaternary structure, part of the 30S ribosomal subunit. Contacts proteins S3 and S10. Zn(2+) serves as cofactor.

Binds 16S rRNA, required for the assembly of 30S particles and may also be responsible for determining the conformation of the 16S rRNA at the A site. This chain is Small ribosomal subunit protein uS14B, found in Staphylococcus saprophyticus subsp. saprophyticus (strain ATCC 15305 / DSM 20229 / NCIMB 8711 / NCTC 7292 / S-41).